A 604-amino-acid chain; its full sequence is Afamin (604 aa).

An N-terminal signal peptide occupies residues Met-1–Thr-21. Albumin domains are found at residues Leu-22–Ile-210, Tyr-211–Glu-403, and Thr-404–Ala-598. Cystine bridges form between Cys-77-Cys-86, Cys-99-Cys-114, Cys-113-Cys-124, Cys-148-Cys-193, Cys-192-Cys-201, Cys-224-Cys-270, Cys-269-Cys-277, Cys-289-Cys-303, Cys-302-Cys-313, Cys-340-Cys-385, Cys-384-Cys-393, Cys-416-Cys-462, Cys-461-Cys-470, Cys-483-Cys-499, Cys-498-Cys-509, Cys-536-Cys-581, and Cys-580-Cys-589. Residue Asn-109 is glycosylated (N-linked (GlcNAc...) asparagine). Residues Ala-215 to Lys-319 form a binding pocket for hydrophobic ligands region. Asn-434 is a glycosylation site (N-linked (GlcNAc...) asparagine).

Belongs to the ALB/AFP/VDB family. In terms of assembly, forms a 1:1 complex with Wnt family members; interacts with WNT3A and WNT5A. Interacts with WNT1, WNT2B, WNT3, WNT7A, WNT7B, WNT8, WNT9A, WNT9B, WNT10A and WNT10B. In terms of processing, N-glycosylated; more than 90% of the glycans are sialylated.

It is found in the secreted. Its function is as follows. Functions as a carrier for hydrophobic molecules in body fluids. Essential for the solubility and activity of lipidated Wnt family members, including WNT1, WNT2B, WNT3, WNT3A, WNT5A, WNT7A, WNT7B, WNT8, WNT9A, WNT9B, WNT10A and WNT10B. Binds vitamin E. May transport vitamin E in body fluids under conditions where the lipoprotein system is not sufficient. May be involved in the transport of vitamin E across the blood-brain barrier. The polypeptide is Afamin (AFM) (Bos taurus (Bovine)).